The primary structure comprises 216 residues: Cyclic AMP receptor protein (216 aa).

6-126 (LFHGLAPEEV…HNLAALLARR (121 aa)) serves as a coordination point for a nucleoside 3',5'-cyclic phosphate. 3',5'-cyclic AMP contacts are provided by residues 75 to 78 (GEMS) and 85 to 86 (RS). One can recognise an HTH crp-type domain in the interval 140 to 206 (EEARNRVAYA…PGTVEVREAA (67 aa)). Residues 166–185 (HHELAALAGTSRETVSRVLH) constitute a DNA-binding region (H-T-H motif).

In terms of assembly, homodimer.

In terms of biological role, activates transcription. Positively regulates six promoters upstream of the TTHB186, TTHB147, TTHB178, TTHB159, TTHA0771 and TTHA0176 genes in a cAMP-dependent manner. Regulated genes include clustered regularly interspaced short palindromic repeat (CRISPR) associated (Cas) genes, and the genes encoding a putative transcriptional regulator, a protein containing the exonuclease III-like domain of DNA polymerase, a GCN5-related acetyltransferase homolog, and some T.thermophilus-specific proteins of unknown function. The consensus DNA-binding site of this transcriptional regulator is 5'-(CT)NNG(G/T)(G/T)C(A/C)N(A/T)NNTCACAN(G/C)(G/C)-3' in which N is G, A, T or C. The chain is Cyclic AMP receptor protein from Thermus thermophilus (strain ATCC 27634 / DSM 579 / HB8).